Reading from the N-terminus, the 353-residue chain is ATP-dependent (S)-NAD(P)H-hydrate dehydratase (353 aa).

The YjeF C-terminal domain occupies 18 to 345 (MLARVRQMVP…DEVHTAFLNL (328 aa)). The segment at 95–121 (RSSPPALSSSDSGSSPSRTKSAPDTDP) is disordered. Positions 96-114 (SSPPALSSSDSGSSPSRTK) are enriched in low complexity. (6S)-NADPHX contacts are provided by residues glycine 143 and 196–202 (NVVEFGR). Residues 241 to 245 (KGAKD) and 260 to 269 (GGLKRSGGQG) each bind ATP. Position 270 (aspartate 270) interacts with (6S)-NADPHX.

The protein belongs to the NnrD/CARKD family. The cofactor is Mg(2+).

The protein resides in the cytoplasm. It carries out the reaction (6S)-NADHX + ATP = ADP + phosphate + NADH + H(+). The catalysed reaction is (6S)-NADPHX + ATP = ADP + phosphate + NADPH + H(+). Catalyzes the dehydration of the S-form of NAD(P)HX at the expense of ATP, which is converted to ADP. Together with NAD(P)HX epimerase, which catalyzes the epimerization of the S- and R-forms, the enzyme allows the repair of both epimers of NAD(P)HX, a damaged form of NAD(P)H that is a result of enzymatic or heat-dependent hydration. This Neurospora crassa (strain ATCC 24698 / 74-OR23-1A / CBS 708.71 / DSM 1257 / FGSC 987) protein is ATP-dependent (S)-NAD(P)H-hydrate dehydratase.